A 132-amino-acid chain; its full sequence is Sec-independent protein translocase protein TatB (132 aa).

Residues 2–22 (FDGIGFMELLLIGILGLVVLG) traverse the membrane as a helical segment. The interval 86–132 (LKSAAQSVNRPYKVEDISPASSSAPVDPAPTETKTAETSANSEKPNG) is disordered. Positions 103 to 115 (SPASSSAPVDPAP) are enriched in low complexity. Over residues 117-132 (ETKTAETSANSEKPNG) the composition is skewed to polar residues.

It belongs to the TatB family. The Tat system comprises two distinct complexes: a TatABC complex, containing multiple copies of TatA, TatB and TatC subunits, and a separate TatA complex, containing only TatA subunits. Substrates initially bind to the TatABC complex, which probably triggers association of the separate TatA complex to form the active translocon.

Its subcellular location is the cell inner membrane. Part of the twin-arginine translocation (Tat) system that transports large folded proteins containing a characteristic twin-arginine motif in their signal peptide across membranes. Together with TatC, TatB is part of a receptor directly interacting with Tat signal peptides. TatB may form an oligomeric binding site that transiently accommodates folded Tat precursor proteins before their translocation. The polypeptide is Sec-independent protein translocase protein TatB (Shewanella sediminis (strain HAW-EB3)).